The chain runs to 224 residues: Uridylate kinase (224 aa).

ATP is bound at residue 8–12 (KITGK). Gly43 contacts UMP. ATP contacts are provided by Gly44 and Arg48. Residues Asp66 and 114–120 (LIPGQST) each bind UMP. 3 residues coordinate ATP: Ser140, Tyr146, and Asp149.

Belongs to the UMP kinase family. As to quaternary structure, homohexamer.

Its subcellular location is the cytoplasm. It carries out the reaction UMP + ATP = UDP + ADP. The protein operates within pyrimidine metabolism; CTP biosynthesis via de novo pathway; UDP from UMP (UMPK route): step 1/1. With respect to regulation, inhibited by UTP. In terms of biological role, catalyzes the reversible phosphorylation of UMP to UDP. The polypeptide is Uridylate kinase (Staphylothermus marinus (strain ATCC 43588 / DSM 3639 / JCM 9404 / F1)).